Consider the following 252-residue polypeptide: Hydroxyacylglutathione hydrolase (252 aa).

Residues His54, His56, Asp58, His59, His113, Asp132, and His170 each contribute to the Zn(2+) site.

It belongs to the metallo-beta-lactamase superfamily. Glyoxalase II family. In terms of assembly, monomer. It depends on Zn(2+) as a cofactor.

It catalyses the reaction an S-(2-hydroxyacyl)glutathione + H2O = a 2-hydroxy carboxylate + glutathione + H(+). It functions in the pathway secondary metabolite metabolism; methylglyoxal degradation; (R)-lactate from methylglyoxal: step 2/2. In terms of biological role, thiolesterase that catalyzes the hydrolysis of S-D-lactoyl-glutathione to form glutathione and D-lactic acid. In Gloeobacter violaceus (strain ATCC 29082 / PCC 7421), this protein is Hydroxyacylglutathione hydrolase.